Consider the following 289-residue polypeptide: Glucosamine-6-phosphate deaminase 1 (289 aa).

Lys64 bears the N6-acetyllysine mark. Asp72 functions as the Proton acceptor; for enolization step in the catalytic mechanism. Asp141 serves as the catalytic For ring-opening step. Residue His143 is the Proton acceptor; for ring-opening step of the active site. Glu148 acts as the For ring-opening step in catalysis. Thr161 carries the post-translational modification Phosphothreonine.

Belongs to the glucosamine/galactosamine-6-phosphate isomerase family. In terms of assembly, homohexamer.

It localises to the cytoplasm. It catalyses the reaction alpha-D-glucosamine 6-phosphate + H2O = beta-D-fructose 6-phosphate + NH4(+). It functions in the pathway nucleotide-sugar biosynthesis; UDP-N-acetyl-alpha-D-glucosamine biosynthesis; alpha-D-glucosamine 6-phosphate from D-fructose 6-phosphate: step 1/1. With respect to regulation, allosterically activated by N-acetylglucosamine-6-phosphate (GlcNAc6P). Catalyzes the reversible conversion of alpha-D-glucosamine 6-phosphate (GlcN-6P) into beta-D-fructose 6-phosphate (Fru-6P) and ammonium ion, a regulatory reaction step in de novo uridine diphosphate-N-acetyl-alpha-D-glucosamine (UDP-GlcNAc) biosynthesis via hexosamine pathway. Deamination is coupled to aldo-keto isomerization mediating the metabolic flux from UDP-GlcNAc toward Fru-6P. At high ammonium level can drive amination and isomerization of Fru-6P toward hexosamines and UDP-GlcNAc synthesis. Has a role in fine tuning the metabolic fluctuations of cytosolic UDP-GlcNAc and their effects on hyaluronan synthesis that occur during tissue remodeling. Seems to trigger calcium oscillations in mammalian eggs. These oscillations serve as the essential trigger for egg activation and early development of the embryo. The polypeptide is Glucosamine-6-phosphate deaminase 1 (Homo sapiens (Human)).